Reading from the N-terminus, the 444-residue chain is Serine carboxypeptidase 2 (444 aa).

N60–G62 contributes to the substrate binding site. 3 disulfide bridges follow: C65–C324, C222–C234, and C258–C291. N-linked (GlcNAc...) asparagine glycans are attached at residues N116 and N127. E157 to Y159 is a substrate binding site. The active site involves S158. An N-linked (GlcNAc...) asparagine glycan is attached at N259. The propeptide at I260–G286 is linker peptide. N-linked (GlcNAc...) asparagine glycans are attached at residues N312 and N318. Catalysis depends on residues D361 and H413. Residue R409–H413 coordinates substrate.

This sequence belongs to the peptidase S10 family. Carboxypeptidase II is a dimer, where each monomer is composed of two chains linked by a disulfide bond. N-glycosylated.

It catalyses the reaction Preferential release of a C-terminal arginine or lysine residue.. This Triticum aestivum (Wheat) protein is Serine carboxypeptidase 2 (CBP2).